Consider the following 485-residue polypeptide: Probable glycine dehydrogenase (decarboxylating) subunit 2 (485 aa).

Lys-273 is modified (N6-(pyridoxal phosphate)lysine).

Belongs to the GcvP family. C-terminal subunit subfamily. As to quaternary structure, the glycine cleavage system is composed of four proteins: P, T, L and H. In this organism, the P 'protein' is a heterodimer of two subunits. Pyridoxal 5'-phosphate is required as a cofactor.

The enzyme catalyses N(6)-[(R)-lipoyl]-L-lysyl-[glycine-cleavage complex H protein] + glycine + H(+) = N(6)-[(R)-S(8)-aminomethyldihydrolipoyl]-L-lysyl-[glycine-cleavage complex H protein] + CO2. In terms of biological role, the glycine cleavage system catalyzes the degradation of glycine. The P protein binds the alpha-amino group of glycine through its pyridoxal phosphate cofactor; CO(2) is released and the remaining methylamine moiety is then transferred to the lipoamide cofactor of the H protein. This Bacillus licheniformis (strain ATCC 14580 / DSM 13 / JCM 2505 / CCUG 7422 / NBRC 12200 / NCIMB 9375 / NCTC 10341 / NRRL NRS-1264 / Gibson 46) protein is Probable glycine dehydrogenase (decarboxylating) subunit 2.